We begin with the raw amino-acid sequence, 286 residues long: Transcription factor bHLH137 (286 aa).

A compositionally biased stretch (polar residues) spans 63 to 84 (SGSEKLANTTKTATTGSSSCDQ). The tract at residues 63–149 (SGSEKLANTT…RGQATDSHSL (87 aa)) is disordered. One can recognise a bHLH domain in the interval 142–192 (QATDSHSLAERVRREKISERMRTLQNLVPGCDKVTGKALMLDEIINYVQTL).

Homodimer.

It localises to the nucleus. This is Transcription factor bHLH137 (BHLH137) from Arabidopsis thaliana (Mouse-ear cress).